We begin with the raw amino-acid sequence, 185 residues long: Threonylcarbamoyl-AMP synthase (185 aa).

The 182-residue stretch at 4–185 (SFRAQCAARV…LVTGQVIRPA (182 aa)) folds into the YrdC-like domain.

It belongs to the SUA5 family. TsaC subfamily.

It is found in the cytoplasm. The enzyme catalyses L-threonine + hydrogencarbonate + ATP = L-threonylcarbamoyladenylate + diphosphate + H2O. In terms of biological role, required for the formation of a threonylcarbamoyl group on adenosine at position 37 (t(6)A37) in tRNAs that read codons beginning with adenine. Catalyzes the conversion of L-threonine, HCO(3)(-)/CO(2) and ATP to give threonylcarbamoyl-AMP (TC-AMP) as the acyladenylate intermediate, with the release of diphosphate. This is Threonylcarbamoyl-AMP synthase from Pseudomonas aeruginosa (strain UCBPP-PA14).